A 279-amino-acid polypeptide reads, in one-letter code: 3-methyl-2-oxobutanoate hydroxymethyltransferase (279 aa).

2 residues coordinate Mg(2+): D53 and D92. 3-methyl-2-oxobutanoate is bound by residues 53–54 (DS), D92, and K122. Position 124 (E124) interacts with Mg(2+). The active-site Proton acceptor is the E191.

Belongs to the PanB family. Homodecamer; pentamer of dimers. Mg(2+) is required as a cofactor.

Its subcellular location is the cytoplasm. The enzyme catalyses 3-methyl-2-oxobutanoate + (6R)-5,10-methylene-5,6,7,8-tetrahydrofolate + H2O = 2-dehydropantoate + (6S)-5,6,7,8-tetrahydrofolate. Its pathway is cofactor biosynthesis; (R)-pantothenate biosynthesis; (R)-pantoate from 3-methyl-2-oxobutanoate: step 1/2. Functionally, catalyzes the reversible reaction in which hydroxymethyl group from 5,10-methylenetetrahydrofolate is transferred onto alpha-ketoisovalerate to form ketopantoate. This Maricaulis maris (strain MCS10) (Caulobacter maris) protein is 3-methyl-2-oxobutanoate hydroxymethyltransferase.